The chain runs to 209 residues: ATP-dependent Clp protease proteolytic subunit (209 aa).

The active-site Nucleophile is S106. H131 is a catalytic residue.

This sequence belongs to the peptidase S14 family. In terms of assembly, fourteen ClpP subunits assemble into 2 heptameric rings which stack back to back to give a disk-like structure with a central cavity, resembling the structure of eukaryotic proteasomes.

Its subcellular location is the cytoplasm. It carries out the reaction Hydrolysis of proteins to small peptides in the presence of ATP and magnesium. alpha-casein is the usual test substrate. In the absence of ATP, only oligopeptides shorter than five residues are hydrolyzed (such as succinyl-Leu-Tyr-|-NHMec, and Leu-Tyr-Leu-|-Tyr-Trp, in which cleavage of the -Tyr-|-Leu- and -Tyr-|-Trp bonds also occurs).. In terms of biological role, cleaves peptides in various proteins in a process that requires ATP hydrolysis. Has a chymotrypsin-like activity. Plays a major role in the degradation of misfolded proteins. This Brucella suis biovar 1 (strain 1330) protein is ATP-dependent Clp protease proteolytic subunit.